The primary structure comprises 209 residues: Guanylate kinase (209 aa).

Positions 8-186 (GVLYIVSAPS…ALQDLVAITR (179 aa)) constitute a Guanylate kinase-like domain. An ATP-binding site is contributed by 15–22 (APSGAGKT).

Belongs to the guanylate kinase family.

It localises to the cytoplasm. It catalyses the reaction GMP + ATP = GDP + ADP. In terms of biological role, essential for recycling GMP and indirectly, cGMP. This Thiobacillus denitrificans (strain ATCC 25259 / T1) protein is Guanylate kinase.